The sequence spans 325 residues: Hydroxymethylglutaryl-CoA lyase, mitochondrial (325 aa).

Residues 1–27 constitute a mitochondrion transit peptide; that stretch reads MAAMRKAVPRRLVGLASLRAVSTSSMG. In terms of domain architecture, Pyruvate carboxyltransferase spans 33 to 300; that stretch reads VKIVEVGPRD…HTGVNLQKLL (268 aa). Residue R41 participates in substrate binding. D42 contributes to the a divalent metal cation binding site. K48 is modified (N6-acetyllysine; alternate). K48 carries the post-translational modification N6-succinyllysine; alternate. K111 is subject to N6-acetyllysine. 2 positions are modified to N6-acetyllysine; alternate: K137 and K179. Residues K137 and K179 each carry the N6-succinyllysine; alternate modification. Residues H233 and H235 each contribute to the a divalent metal cation site. The active site involves C266. Residue N275 coordinates a divalent metal cation. Residues 323-325 carry the Microbody targeting signal motif; the sequence is CKL. The residue at position 324 (K324) is an N6-acetyllysine.

The protein belongs to the HMG-CoA lyase family. As to quaternary structure, homodimer; disulfide-linked. Can also form homotetramers.

It is found in the mitochondrion matrix. The protein resides in the peroxisome. It catalyses the reaction (3S)-3-hydroxy-3-methylglutaryl-CoA = acetoacetate + acetyl-CoA. The protein operates within metabolic intermediate metabolism; (S)-3-hydroxy-3-methylglutaryl-CoA degradation; acetoacetate from (S)-3-hydroxy-3-methylglutaryl-CoA: step 1/1. Functionally, mitochondrial 3-hydroxy-3-methylglutaryl-CoA lyase that catalyzes a cation-dependent cleavage of (S)-3-hydroxy-3-methylglutaryl-CoA into acetyl-CoA and acetoacetate, a key step in ketogenesis. Terminal step in leucine catabolism. Ketone bodies (beta-hydroxybutyrate, acetoacetate and acetone) are essential as an alternative source of energy to glucose, as lipid precursors and as regulators of metabolism. This chain is Hydroxymethylglutaryl-CoA lyase, mitochondrial (HMGCL), found in Pongo abelii (Sumatran orangutan).